Reading from the N-terminus, the 607-residue chain is MVKRNHKFQSGEGAQYLTRKAAMRKLQLSMQDFRRLCILKGIYPREPKHRAIAQRGSTDIKILYHKKDITFLLHEPIVWTLRDRKIFNRRIAAAKGKGNNLLKNVRMANYPEIKLDHIIKERFPTFVDAIKELDDCMTLLFLFSTFPAMKTVTRDITSMARRLSIEFMHYCIASKALRKVFVSIKGYYFQAEIKGELVTWIVPHYYPYQPQRKEYVDFKIMKSFADFFTVMAGFVNFRLYNSINLVYPPQFSVSLDSEESRSNEDTFISERIAALNSDLLRSDQMGTEEEDDQIDLDLLDGDKDSEQVRKLREDAVSLNKLKNLFKGLKFFINREVPREPLVFILRCFGGRASWDRNLFVGATFDESDETITHQIVDRPSLPKQYISRDYVQPQWIFDCVNQRKLLPVNKYLIGAVLPPHLSPFNRDDAIYVPPEEAALRDGVELDAGARNGEERISDDEDEDAEQRQQVQLDYALVKAFREEKTEALNSGALEEAPEEEDDDEEAPEEDEQTKQKNEKKKKMAVVSGKIFKENPSEQKKLTKQEEALRARMVKSRHKKLYRKMLEKQKKQTKEANLLKEKRQQIDKKQRVEQTQKRKTQRKEILAK.

The BRCT domain maps to 320–413 (KLKNLFKGLK…KLLPVNKYLI (94 aa)). The tract at residues 486–607 (EALNSGALEE…KTQRKEILAK (122 aa)) is disordered. The segment covering 495-511 (EAPEEEDDDEEAPEEDE) has biased composition (acidic residues). The span at 530–549 (IFKENPSEQKKLTKQEEALR) shows a compositional bias: basic and acidic residues. The segment covering 551–562 (RMVKSRHKKLYR) has biased composition (basic residues). Positions 563–607 (KMLEKQKKQTKEANLLKEKRQQIDKKQRVEQTQKRKTQRKEILAK) are enriched in basic and acidic residues.

The protein belongs to the pescadillo family.

The protein localises to the nucleus. The protein resides in the nucleolus. It localises to the nucleoplasm. Functionally, required for maturation of ribosomal RNAs and formation of the large ribosomal subunit. This Culex quinquefasciatus (Southern house mosquito) protein is Pescadillo homolog.